A 556-amino-acid chain; its full sequence is Glutamine--tRNA ligase (556 aa).

Residues 35 to 45 carry the 'HIGH' region motif; it reads PEPNGYLHIGH. ATP contacts are provided by residues 36 to 38 and 42 to 48; these read EPN and HIGHAKS. Residues aspartate 68 and tyrosine 213 each coordinate L-glutamine. ATP-binding positions include threonine 232 and 262 to 263; that span reads RL. Residues 269–273 carry the 'KMSKS' region motif; it reads VTSKR.

It belongs to the class-I aminoacyl-tRNA synthetase family. Monomer.

Its subcellular location is the cytoplasm. The catalysed reaction is tRNA(Gln) + L-glutamine + ATP = L-glutaminyl-tRNA(Gln) + AMP + diphosphate. This chain is Glutamine--tRNA ligase, found in Pseudomonas aeruginosa (strain LESB58).